We begin with the raw amino-acid sequence, 318 residues long: Homoserine kinase (318 aa).

97 to 107 is a binding site for ATP; it reads PIGSGLGSSAC.

The protein belongs to the GHMP kinase family. Homoserine kinase subfamily.

The protein resides in the cytoplasm. The enzyme catalyses L-homoserine + ATP = O-phospho-L-homoserine + ADP + H(+). The protein operates within amino-acid biosynthesis; L-threonine biosynthesis; L-threonine from L-aspartate: step 4/5. Its function is as follows. Catalyzes the ATP-dependent phosphorylation of L-homoserine to L-homoserine phosphate. The chain is Homoserine kinase from Photobacterium profundum (strain SS9).